Reading from the N-terminus, the 336-residue chain is Holliday junction branch migration complex subunit RuvB (336 aa).

The large ATPase domain (RuvB-L) stretch occupies residues 1 to 182 (MKERIVNLET…FGMSFRMQFY (182 aa)). ATP is bound by residues Leu-21, Arg-22, Gly-63, Lys-66, Thr-67, Ser-68, 129–131 (EDF), Arg-172, Tyr-182, and Arg-219. Thr-67 lines the Mg(2+) pocket. The interval 183–253 (SPSELALIIK…ITLHALNELG (71 aa)) is small ATPAse domain (RuvB-S). A head domain (RuvB-H) region spans residues 256 to 336 (ELGFDEADLA…IPTLNPQTLF (81 aa)). DNA-binding residues include Arg-310 and Arg-315.

Belongs to the RuvB family. As to quaternary structure, homohexamer. Forms an RuvA(8)-RuvB(12)-Holliday junction (HJ) complex. HJ DNA is sandwiched between 2 RuvA tetramers; dsDNA enters through RuvA and exits via RuvB. An RuvB hexamer assembles on each DNA strand where it exits the tetramer. Each RuvB hexamer is contacted by two RuvA subunits (via domain III) on 2 adjacent RuvB subunits; this complex drives branch migration. In the full resolvosome a probable DNA-RuvA(4)-RuvB(12)-RuvC(2) complex forms which resolves the HJ.

It is found in the cytoplasm. The enzyme catalyses ATP + H2O = ADP + phosphate + H(+). Its function is as follows. The RuvA-RuvB-RuvC complex processes Holliday junction (HJ) DNA during genetic recombination and DNA repair, while the RuvA-RuvB complex plays an important role in the rescue of blocked DNA replication forks via replication fork reversal (RFR). RuvA specifically binds to HJ cruciform DNA, conferring on it an open structure. The RuvB hexamer acts as an ATP-dependent pump, pulling dsDNA into and through the RuvAB complex. RuvB forms 2 homohexamers on either side of HJ DNA bound by 1 or 2 RuvA tetramers; 4 subunits per hexamer contact DNA at a time. Coordinated motions by a converter formed by DNA-disengaged RuvB subunits stimulates ATP hydrolysis and nucleotide exchange. Immobilization of the converter enables RuvB to convert the ATP-contained energy into a lever motion, pulling 2 nucleotides of DNA out of the RuvA tetramer per ATP hydrolyzed, thus driving DNA branch migration. The RuvB motors rotate together with the DNA substrate, which together with the progressing nucleotide cycle form the mechanistic basis for DNA recombination by continuous HJ branch migration. Branch migration allows RuvC to scan DNA until it finds its consensus sequence, where it cleaves and resolves cruciform DNA. This chain is Holliday junction branch migration complex subunit RuvB, found in Helicobacter pylori (strain Shi470).